The sequence spans 250 residues: MSGHSKWATTKHKKAVIDARRGKMFARLIKNIEVAARVGGGDPAGNPTLYDAIQKAKKSSVPNENIERARKRGAGEEAGGADWQTITYEGYAPNGVAVLIECLTDNRNRAASEVRVAMTRNGGTMADPGSVSYLFSRKSVVTCEKNGLTEDDILAAVLDAGAEEVEDLGDSFEIICEPTDLVAVRTALQDAGIDYDSAEAGFQPSVTVPLNADGAQKVMRLVDALEDSDDVQDVWTNADIPDEILAQIEE.

It belongs to the TACO1 family.

The protein localises to the cytoplasm. The protein is Probable transcriptional regulatory protein MAP_1030 of Mycolicibacterium paratuberculosis (strain ATCC BAA-968 / K-10) (Mycobacterium paratuberculosis).